We begin with the raw amino-acid sequence, 580 residues long: NADH-ubiquinone oxidoreductase chain 5 (580 aa).

16 helical membrane passes run 12-32, 50-70, 92-112, 113-133, 153-173, 176-196, 218-240, 249-269, 274-294, 300-320, 343-363, 378-400, 427-447, 464-484, 500-520, and 560-580; these read FYIL…FLLM, IVMT…VLLI, ILLV…PNLI, SILL…IYFQ, VALL…YIFY, MMKN…AAMT, SALV…FNIL, FLLL…NFEF, IIAL…SIGY, FHLL…GVII, CSCF…AGFY, NFFS…FRLV, IFFL…LMFF, MVCL…FFFI, MWFM…ILGM, and IYLL…LFLN.

This sequence belongs to the complex I subunit 5 family.

The protein localises to the mitochondrion inner membrane. The catalysed reaction is a ubiquinone + NADH + 5 H(+)(in) = a ubiquinol + NAD(+) + 4 H(+)(out). In terms of biological role, core subunit of the mitochondrial membrane respiratory chain NADH dehydrogenase (Complex I) that is believed to belong to the minimal assembly required for catalysis. Complex I functions in the transfer of electrons from NADH to the respiratory chain. The immediate electron acceptor for the enzyme is believed to be ubiquinone. This is NADH-ubiquinone oxidoreductase chain 5 from Aedes aegypti (Yellowfever mosquito).